Consider the following 137-residue polypeptide: MIIIALDFGTKNIGVAVGQNYTNTARSLPSIKVKNKKLNIEKLNKLIDEWKPNAIVVGHPLNIDGTKQKITQCSENFSKKLKNIFKIPILLHDERLSTVEAKAILFEKYGYKSLKKERIDSMSAVIILESWFLYSKN.

This sequence belongs to the YqgF nuclease family.

It is found in the cytoplasm. In terms of biological role, could be a nuclease involved in processing of the 5'-end of pre-16S rRNA. The protein is Putative pre-16S rRNA nuclease of Buchnera aphidicola subsp. Baizongia pistaciae (strain Bp).